Here is a 151-residue protein sequence, read N- to C-terminus: UPF0208 membrane protein ESA_00924 (151 aa).

Transmembrane regions (helical) follow at residues 46 to 65 (FAIR…QIAL) and 69 to 91 (LGPA…WWLG).

The protein belongs to the UPF0208 family.

The protein localises to the cell inner membrane. The protein is UPF0208 membrane protein ESA_00924 of Cronobacter sakazakii (strain ATCC BAA-894) (Enterobacter sakazakii).